An 81-amino-acid polypeptide reads, in one-letter code: MGGISVWQLLIIAVIVVLLFGTKKLRGIGGDLGSAVKGFKKAMSDEDSAKNEKDADFEPKSLEKQQQKEAAPETKKDKEQA.

A helical transmembrane segment spans residues 1–21; the sequence is MGGISVWQLLIIAVIVVLLFG. The interval 42 to 81 is disordered; the sequence is AMSDEDSAKNEKDADFEPKSLEKQQQKEAAPETKKDKEQA.

It belongs to the TatA/E family. The Tat system comprises two distinct complexes: a TatABC complex, containing multiple copies of TatA, TatB and TatC subunits, and a separate TatA complex, containing only TatA subunits. Substrates initially bind to the TatABC complex, which probably triggers association of the separate TatA complex to form the active translocon.

It localises to the cell inner membrane. Its function is as follows. Part of the twin-arginine translocation (Tat) system that transports large folded proteins containing a characteristic twin-arginine motif in their signal peptide across membranes. TatA could form the protein-conducting channel of the Tat system. The chain is Sec-independent protein translocase protein TatA from Vibrio parahaemolyticus serotype O3:K6 (strain RIMD 2210633).